A 204-amino-acid polypeptide reads, in one-letter code: Cytochrome b6 (204 aa).

Residues 23–43 (YCLGGITLTSFLVQVATGSAM) traverse the membrane as a helical segment. Cysteine 24 provides a ligand contact to heme c. Heme b contacts are provided by histidine 75 and histidine 89. The next 3 helical transmembrane spans lie at 81–101 (MMVLMMILHVFRVYLTGGFKK), 107–127 (WVTGVILGVLTVSFGVTGYSL), and 136–157 (AVKIVTGVPEAIPVIGSPLVEL). Residues histidine 176 and histidine 191 each contribute to the heme b site. A helical membrane pass occupies residues 177–197 (TFILPLLTAVFMPMHFLMIRK).

It belongs to the cytochrome b family. PetB subfamily. The 4 large subunits of the cytochrome b6-f complex are cytochrome b6, subunit IV (17 kDa polypeptide, PetD), cytochrome f and the Rieske protein, while the 4 small subunits are PetG, PetL, PetM and PetN. The complex functions as a dimer. It depends on heme b as a cofactor. Requires heme c as cofactor.

The protein localises to the plastid. The protein resides in the chloroplast thylakoid membrane. In terms of biological role, component of the cytochrome b6-f complex, which mediates electron transfer between photosystem II (PSII) and photosystem I (PSI), cyclic electron flow around PSI, and state transitions. The sequence is that of Cytochrome b6 from Picea abies (Norway spruce).